Consider the following 51-residue polypeptide: MPQMAPLNWAMMTIMFSLSLLVSMIILYSNFNSTPPTKMKMKTSQKLIWKW.

Residues 7 to 27 (LNWAMMTIMFSLSLLVSMIIL) traverse the membrane as a helical segment.

The protein belongs to the ATPase protein 8 family. In terms of assembly, F-type ATPases have 2 components, CF(1) - the catalytic core - and CF(0) - the membrane proton channel.

It localises to the mitochondrion membrane. Functionally, mitochondrial membrane ATP synthase (F(1)F(0) ATP synthase or Complex V) produces ATP from ADP in the presence of a proton gradient across the membrane which is generated by electron transport complexes of the respiratory chain. F-type ATPases consist of two structural domains, F(1) - containing the extramembraneous catalytic core and F(0) - containing the membrane proton channel, linked together by a central stalk and a peripheral stalk. During catalysis, ATP synthesis in the catalytic domain of F(1) is coupled via a rotary mechanism of the central stalk subunits to proton translocation. Part of the complex F(0) domain. Minor subunit located with subunit a in the membrane. In Limulus polyphemus (Atlantic horseshoe crab), this protein is ATP synthase protein 8 (MT-ATP8).